A 648-amino-acid polypeptide reads, in one-letter code: Zinc finger protein 202 (648 aa).

Lys22 is covalently cross-linked (Glycyl lysine isopeptide (Lys-Gly) (interchain with G-Cter in SUMO2)). The SCAN box domain occupies 46–127 (HQNFRRFRYQ…VTLVEGLQKQ (82 aa)). Positions 146-221 (SEETVHLGVE…PDLPAERSSG (76 aa)) are disordered. Over residues 165 to 182 (PVQSSTPEQSPEETTQSP) the composition is skewed to polar residues. Residues 237–308 (VTFKDVAVCF…DIQEPQETQE (72 aa)) enclose the KRAB domain. 2 C2H2-type zinc fingers span residues 397–419 (HDCSVCGKSFTCNSHLVRHLRTH) and 425–447 (YKCMECGKSYTRSSHLARHQKVH). Glycyl lysine isopeptide (Lys-Gly) (interchain with G-Cter in SUMO2) cross-links involve residues Lys454 and Lys460. Ser466 is modified (phosphoserine). Residues 481–503 (YRCDDCGKHFRWTSDLVRHQRTH) form a C2H2-type 3 zinc finger. Residues Lys507 and Lys521 each participate in a glycyl lysine isopeptide (Lys-Gly) (interchain with G-Cter in SUMO2) cross-link. 5 consecutive C2H2-type zinc fingers follow at residues 509–531 (FFCTICGKSFSQKSVLTTHQRIH), 537–559 (YLCGECGEDFSEHRRYLAHRKTH), 565–587 (YLCSECGRCFTHSAAFAKHLRGH), 593–615 (CRCNECGKSFSRRDHLVRHQRTH), and 621–643 (FTCPTCGKSFSRGYHLIRHQRTH).

Interacts with SDP1. In terms of tissue distribution, highly expressed in testis. Also expressed in breast carcinoma cell lines.

Its subcellular location is the nucleus. In terms of biological role, transcriptional repressor that binds to elements found predominantly in genes that participate in lipid metabolism. Among its targets are structural components of lipoprotein particles (apolipoproteins AIV, CIII, and E), enzymes involved in lipid processing (lipoprotein lipase, lecithin cholesteryl ester transferase), transporters involved in lipid homeostasis (ABCA1, ABCG1), and several genes involved in processes related to energy metabolism and vascular disease. This chain is Zinc finger protein 202 (ZNF202), found in Homo sapiens (Human).